We begin with the raw amino-acid sequence, 434 residues long: 3-phosphoshikimate 1-carboxyvinyltransferase (434 aa).

Residues lysine 15, serine 16, and arginine 20 each contribute to the 3-phosphoshikimate site. Residue lysine 15 participates in phosphoenolpyruvate binding. The phosphoenolpyruvate site is built by glycine 96 and arginine 124. The 3-phosphoshikimate site is built by serine 169, glutamine 171, serine 195, aspartate 319, and lysine 346. Residue glutamine 171 coordinates phosphoenolpyruvate. The active-site Proton acceptor is the aspartate 319. Residues arginine 350 and arginine 394 each coordinate phosphoenolpyruvate.

The protein belongs to the EPSP synthase family. In terms of assembly, monomer.

The protein resides in the cytoplasm. The enzyme catalyses 3-phosphoshikimate + phosphoenolpyruvate = 5-O-(1-carboxyvinyl)-3-phosphoshikimate + phosphate. The protein operates within metabolic intermediate biosynthesis; chorismate biosynthesis; chorismate from D-erythrose 4-phosphate and phosphoenolpyruvate: step 6/7. In terms of biological role, catalyzes the transfer of the enolpyruvyl moiety of phosphoenolpyruvate (PEP) to the 5-hydroxyl of shikimate-3-phosphate (S3P) to produce enolpyruvyl shikimate-3-phosphate and inorganic phosphate. The polypeptide is 3-phosphoshikimate 1-carboxyvinyltransferase (Chlorobaculum tepidum (strain ATCC 49652 / DSM 12025 / NBRC 103806 / TLS) (Chlorobium tepidum)).